Reading from the N-terminus, the 404-residue chain is Caspase-1 (404 aa).

A CARD domain is found at 1–91; that stretch reads MADKVLKDKR…HLAQTLGLSS (91 aa). Positions 1 to 119 are excised as a propeptide; sequence MADKVLKDKR…SLPAFVENMP (119 aa). Catalysis depends on residues H237 and C285. Residues 298–316 constitute a propeptide that is removed on maturation; sequence SPKASTDSWTHQPLMLQSD. S302 is modified (phosphoserine).

It belongs to the peptidase C14A family. As to quaternary structure, heterotetramer that consists of two anti-parallel arranged heterodimers, each one formed by a 20 kDa (Caspase-1 subunit p20) and a 10 kDa (Caspase-1 subunit p10) subunit. May be a component of the inflammasome, a protein complex which also includes PYCARD, CARD8 and NLRP2 and whose function would be the activation of pro-inflammatory caspases. Component of the AIM2 PANoptosome complex, a multiprotein complex that drives inflammatory cell death (PANoptosis). Both the p10 and p20 subunits interact with MEFV. Interacts with CARD17P/INCA and CARD18. Interacts with SERPINB1; this interaction regulates CASP1 activity. In terms of assembly, heterotetramer that consists of two anti-parallel arranged heterodimers, each one formed by a 20 kDa (Caspase-1 subunit p20) and a 10 kDa (Caspase-1 subunit p10) subunit. In terms of processing, the two subunits are derived from the precursor sequence by an autocatalytic mechanism. Post-translationally, ubiquitinated via 'Lys-11'-linked polyubiquitination. Deubiquitinated by USP8.

The protein localises to the cytoplasm. Its subcellular location is the cell membrane. The catalysed reaction is Strict requirement for an Asp residue at position P1 and has a preferred cleavage sequence of Tyr-Val-Ala-Asp-|-.. Functionally, thiol protease involved in a variety of inflammatory processes by proteolytically cleaving other proteins, such as the precursors of the inflammatory cytokines interleukin-1 beta (IL1B) and interleukin 18 (IL18) as well as the pyroptosis inducer Gasdermin-D (GSDMD), into active mature peptides. Plays a key role in cell immunity as an inflammatory response initiator: once activated through formation of an inflammasome complex, it initiates a pro-inflammatory response through the cleavage of the two inflammatory cytokines IL1B and IL18, releasing the mature cytokines which are involved in a variety of inflammatory processes. Cleaves a tetrapeptide after an Asp residue at position P1. Also initiates pyroptosis, a programmed lytic cell death pathway, through cleavage of GSDMD. In contrast to cleavage of interleukin IL1B, recognition and cleavage of GSDMD is not strictly dependent on the consensus cleavage site but depends on an exosite interface on CASP1 that recognizes and binds the Gasdermin-D, C-terminal (GSDMD-CT) part. Cleaves and activates CASP7 in response to bacterial infection, promoting plasma membrane repair. Upon inflammasome activation, during DNA virus infection but not RNA virus challenge, controls antiviral immunity through the cleavage of CGAS, rendering it inactive. In apoptotic cells, cleaves SPHK2 which is released from cells and remains enzymatically active extracellularly. In Canis lupus familiaris (Dog), this protein is Caspase-1 (CASP1).